The chain runs to 302 residues: UDP-3-O-acyl-N-acetylglucosamine deacetylase (302 aa).

H78, H235, and D239 together coordinate Zn(2+). Catalysis depends on H262, which acts as the Proton donor.

This sequence belongs to the LpxC family. It depends on Zn(2+) as a cofactor.

It catalyses the reaction a UDP-3-O-[(3R)-3-hydroxyacyl]-N-acetyl-alpha-D-glucosamine + H2O = a UDP-3-O-[(3R)-3-hydroxyacyl]-alpha-D-glucosamine + acetate. It functions in the pathway glycolipid biosynthesis; lipid IV(A) biosynthesis; lipid IV(A) from (3R)-3-hydroxytetradecanoyl-[acyl-carrier-protein] and UDP-N-acetyl-alpha-D-glucosamine: step 2/6. Functionally, catalyzes the hydrolysis of UDP-3-O-myristoyl-N-acetylglucosamine to form UDP-3-O-myristoylglucosamine and acetate, the committed step in lipid A biosynthesis. The chain is UDP-3-O-acyl-N-acetylglucosamine deacetylase from Bdellovibrio bacteriovorus (strain ATCC 15356 / DSM 50701 / NCIMB 9529 / HD100).